A 253-amino-acid chain; its full sequence is 5'-nucleotidase SurE (253 aa).

Residues Asp-8, Asp-9, Ser-39, and Asn-96 each contribute to the a divalent metal cation site.

It belongs to the SurE nucleotidase family. A divalent metal cation serves as cofactor.

It localises to the cytoplasm. The enzyme catalyses a ribonucleoside 5'-phosphate + H2O = a ribonucleoside + phosphate. In terms of biological role, nucleotidase that shows phosphatase activity on nucleoside 5'-monophosphates. In Rhodopirellula baltica (strain DSM 10527 / NCIMB 13988 / SH1), this protein is 5'-nucleotidase SurE.